A 176-amino-acid chain; its full sequence is MGYPKEGETIQIHSYKHNGLIHRIWNETTILKSTEMCVIGANDRTMVTESDGRTWITREPAICYFHARQWFNVIGMLREDGVHYYCNISSPFAYDGEAIKYIDYDLDVKVFPDMTYNILDEDEYDDHRKAMNYPKEIDSILRDYLNTLLHWIHQRQGPFAPEFVDMWYERYLRYTK.

The Proton donor role is filled by R23. Mg(2+) is bound by residues N87, D103, D105, D107, D120, and E123.

Belongs to the Ntdp family. Requires Mg(2+) as cofactor.

It carries out the reaction a ribonucleoside 5'-triphosphate + H2O = a ribonucleoside 5'-diphosphate + phosphate + H(+). It catalyses the reaction a ribonucleoside 5'-diphosphate + H2O = a ribonucleoside 5'-phosphate + phosphate + H(+). Its function is as follows. Has nucleoside phosphatase activity towards nucleoside triphosphates and nucleoside diphosphates. This Bacillus subtilis (strain 168) protein is Nucleoside triphosphate/diphosphate phosphatase (ygaC).